We begin with the raw amino-acid sequence, 357 residues long: Peptide chain release factor 1 (357 aa).

N5-methylglutamine is present on glutamine 234.

Belongs to the prokaryotic/mitochondrial release factor family. Methylated by PrmC. Methylation increases the termination efficiency of RF1.

It is found in the cytoplasm. Peptide chain release factor 1 directs the termination of translation in response to the peptide chain termination codons UAG and UAA. This chain is Peptide chain release factor 1, found in Arthrobacter sp. (strain FB24).